The following is a 312-amino-acid chain: Ribose-phosphate pyrophosphokinase (312 aa).

ATP contacts are provided by residues 34–36 (DQE) and 93–94 (RQ). Residues H127 and D167 each coordinate Mg(2+). Residue K191 is part of the active site. Residues R193, D217, and 221–225 (DSGGT) each bind D-ribose 5-phosphate.

It belongs to the ribose-phosphate pyrophosphokinase family. Class I subfamily. As to quaternary structure, homohexamer. The cofactor is Mg(2+).

Its subcellular location is the cytoplasm. It catalyses the reaction D-ribose 5-phosphate + ATP = 5-phospho-alpha-D-ribose 1-diphosphate + AMP + H(+). It functions in the pathway metabolic intermediate biosynthesis; 5-phospho-alpha-D-ribose 1-diphosphate biosynthesis; 5-phospho-alpha-D-ribose 1-diphosphate from D-ribose 5-phosphate (route I): step 1/1. Functionally, involved in the biosynthesis of the central metabolite phospho-alpha-D-ribosyl-1-pyrophosphate (PRPP) via the transfer of pyrophosphoryl group from ATP to 1-hydroxyl of ribose-5-phosphate (Rib-5-P). In Hyphomonas neptunium (strain ATCC 15444), this protein is Ribose-phosphate pyrophosphokinase.